A 305-amino-acid polypeptide reads, in one-letter code: Transmembrane epididymal protein 1 (305 aa).

A helical transmembrane segment spans residues 4–24 (FIGHISPGLFLVFYGLYQAII). Asn32 is a glycosylation site (N-linked (GlcNAc...) asparagine). Transmembrane regions (helical) follow at residues 51–71 (LWQI…LIVY), 100–120 (LTMF…RSVL), 124–144 (LVLL…LLLV), 159–179 (SLLI…LWAP), 187–207 (IETF…FILF), and 223–243 (IMLV…CMLG). A disordered region spans residues 285 to 305 (EQQDRDDQAPLLSKSSPCDRA).

Belongs to the TMEM45 family.

The protein resides in the membrane. The protein is Transmembrane epididymal protein 1 (Teddm1) of Rattus norvegicus (Rat).